Reading from the N-terminus, the 74-residue chain is Small ribosomal subunit protein bS18 (74 aa).

Belongs to the bacterial ribosomal protein bS18 family. As to quaternary structure, part of the 30S ribosomal subunit. Forms a tight heterodimer with protein bS6.

Functionally, binds as a heterodimer with protein bS6 to the central domain of the 16S rRNA, where it helps stabilize the platform of the 30S subunit. This chain is Small ribosomal subunit protein bS18, found in Coprothermobacter proteolyticus (strain ATCC 35245 / DSM 5265 / OCM 4 / BT).